Reading from the N-terminus, the 294-residue chain is Phosphatidylserine decarboxylase proenzyme (294 aa).

Residues Asp100, His157, and Ser261 each act as charge relay system; for autoendoproteolytic cleavage activity in the active site. Catalysis depends on Ser261, which acts as the Schiff-base intermediate with substrate; via pyruvic acid; for decarboxylase activity. A Pyruvic acid (Ser); by autocatalysis modification is found at Ser261.

This sequence belongs to the phosphatidylserine decarboxylase family. PSD-B subfamily. Prokaryotic type I sub-subfamily. As to quaternary structure, heterodimer of a large membrane-associated beta subunit and a small pyruvoyl-containing alpha subunit. The cofactor is pyruvate. Post-translationally, is synthesized initially as an inactive proenzyme. Formation of the active enzyme involves a self-maturation process in which the active site pyruvoyl group is generated from an internal serine residue via an autocatalytic post-translational modification. Two non-identical subunits are generated from the proenzyme in this reaction, and the pyruvate is formed at the N-terminus of the alpha chain, which is derived from the carboxyl end of the proenzyme. The autoendoproteolytic cleavage occurs by a canonical serine protease mechanism, in which the side chain hydroxyl group of the serine supplies its oxygen atom to form the C-terminus of the beta chain, while the remainder of the serine residue undergoes an oxidative deamination to produce ammonia and the pyruvoyl prosthetic group on the alpha chain. During this reaction, the Ser that is part of the protease active site of the proenzyme becomes the pyruvoyl prosthetic group, which constitutes an essential element of the active site of the mature decarboxylase.

Its subcellular location is the cell membrane. It carries out the reaction a 1,2-diacyl-sn-glycero-3-phospho-L-serine + H(+) = a 1,2-diacyl-sn-glycero-3-phosphoethanolamine + CO2. The protein operates within phospholipid metabolism; phosphatidylethanolamine biosynthesis; phosphatidylethanolamine from CDP-diacylglycerol: step 2/2. Functionally, catalyzes the formation of phosphatidylethanolamine (PtdEtn) from phosphatidylserine (PtdSer). This chain is Phosphatidylserine decarboxylase proenzyme, found in Histophilus somni (strain 129Pt) (Haemophilus somnus).